The sequence spans 264 residues: Thiazole synthase (264 aa).

The active-site Schiff-base intermediate with DXP is the Lys101. 1-deoxy-D-xylulose 5-phosphate-binding positions include Gly162, 188 to 189 (AG), and 210 to 211 (NT).

Belongs to the ThiG family. As to quaternary structure, homotetramer. Forms heterodimers with either ThiH or ThiS.

It localises to the cytoplasm. The catalysed reaction is [ThiS sulfur-carrier protein]-C-terminal-Gly-aminoethanethioate + 2-iminoacetate + 1-deoxy-D-xylulose 5-phosphate = [ThiS sulfur-carrier protein]-C-terminal Gly-Gly + 2-[(2R,5Z)-2-carboxy-4-methylthiazol-5(2H)-ylidene]ethyl phosphate + 2 H2O + H(+). The protein operates within cofactor biosynthesis; thiamine diphosphate biosynthesis. Functionally, catalyzes the rearrangement of 1-deoxy-D-xylulose 5-phosphate (DXP) to produce the thiazole phosphate moiety of thiamine. Sulfur is provided by the thiocarboxylate moiety of the carrier protein ThiS. In vitro, sulfur can be provided by H(2)S. The polypeptide is Thiazole synthase (Chromobacterium violaceum (strain ATCC 12472 / DSM 30191 / JCM 1249 / CCUG 213 / NBRC 12614 / NCIMB 9131 / NCTC 9757 / MK)).